Consider the following 460-residue polypeptide: ATP synthase subunit beta (460 aa).

ATP is bound at residue 150–157 (GGAGVGKT).

The protein belongs to the ATPase alpha/beta chains family. F-type ATPases have 2 components, CF(1) - the catalytic core - and CF(0) - the membrane proton channel. CF(1) has five subunits: alpha(3), beta(3), gamma(1), delta(1), epsilon(1). CF(0) has three main subunits: a(1), b(2) and c(9-12). The alpha and beta chains form an alternating ring which encloses part of the gamma chain. CF(1) is attached to CF(0) by a central stalk formed by the gamma and epsilon chains, while a peripheral stalk is formed by the delta and b chains.

Its subcellular location is the cell inner membrane. The catalysed reaction is ATP + H2O + 4 H(+)(in) = ADP + phosphate + 5 H(+)(out). Functionally, produces ATP from ADP in the presence of a proton gradient across the membrane. The catalytic sites are hosted primarily by the beta subunits. This Shigella dysenteriae serotype 1 (strain Sd197) protein is ATP synthase subunit beta.